Reading from the N-terminus, the 659-residue chain is UvrABC system protein B (659 aa).

The Helicase ATP-binding domain occupies 25–182; sequence QSIENGNRGQ…KKLIEIQYER (158 aa). 38–45 is a binding site for ATP; it reads GVTGSGKT. The short motif at 91–114 is the Beta-hairpin element; the sequence is YYDYYQPEAYVPQTDTFIEKDASI. A Helicase C-terminal domain is found at 429 to 582; the sequence is QIDDLYGEIQ…QMEYNEEHNI (154 aa). The region spanning 622–657 is the UVR domain; sequence EKLIEQYEEEMKEAAKNLQFERAAELRDIIKDLKEN.

This sequence belongs to the UvrB family. Forms a heterotetramer with UvrA during the search for lesions. Interacts with UvrC in an incision complex.

The protein resides in the cytoplasm. The UvrABC repair system catalyzes the recognition and processing of DNA lesions. A damage recognition complex composed of 2 UvrA and 2 UvrB subunits scans DNA for abnormalities. Upon binding of the UvrA(2)B(2) complex to a putative damaged site, the DNA wraps around one UvrB monomer. DNA wrap is dependent on ATP binding by UvrB and probably causes local melting of the DNA helix, facilitating insertion of UvrB beta-hairpin between the DNA strands. Then UvrB probes one DNA strand for the presence of a lesion. If a lesion is found the UvrA subunits dissociate and the UvrB-DNA preincision complex is formed. This complex is subsequently bound by UvrC and the second UvrB is released. If no lesion is found, the DNA wraps around the other UvrB subunit that will check the other stand for damage. The chain is UvrABC system protein B from Clostridium perfringens (strain ATCC 13124 / DSM 756 / JCM 1290 / NCIMB 6125 / NCTC 8237 / Type A).